A 343-amino-acid polypeptide reads, in one-letter code: MSDQIQLIAPDDWHVHLRDGEMLKQVVPYTAQMFRRAIVMPNLRPPVVTVEAAKAYRDQIVAACHPNWGFTPLMTAYLTDDIAPEEIERGFHEGVFTAAKLYPANATTNSAAGVTELRHIHGVLLVMERIGMPLLIHGEVTDVDVDVFDREAVFIERSLKPIRDRYPGLKVVLEHITTEQAVDFVGSADQNLAATITPHHLHINRNAMFAGGLRSDFYCLPVAKRERHRLALRRAAMSGDRRFFLGTDSAPHARPGKESSCGCAGIFNAPHALESYAMAFAQDDKLDKLEAFASLHGPAFYGLPVNEGIVTLQRDDKLVPNVVNGLVPFHAGETLPWRLQPCT.

Residues His14 and His16 each contribute to the Zn(2+) site. Substrate contacts are provided by residues 16 to 18 (HLR) and Asn42. Positions 100, 137, and 175 each coordinate Zn(2+). Lys100 carries the post-translational modification N6-carboxylysine. His137 is a binding site for substrate. Substrate is bound at residue Leu220. Asp248 contacts Zn(2+). Asp248 is an active-site residue. Substrate-binding residues include His252 and Ala264.

The protein belongs to the metallo-dependent hydrolases superfamily. DHOase family. Class II DHOase subfamily. In terms of assembly, homodimer. Requires Zn(2+) as cofactor.

The enzyme catalyses (S)-dihydroorotate + H2O = N-carbamoyl-L-aspartate + H(+). Its pathway is pyrimidine metabolism; UMP biosynthesis via de novo pathway; (S)-dihydroorotate from bicarbonate: step 3/3. Catalyzes the reversible cyclization of carbamoyl aspartate to dihydroorotate. In Synechococcus sp. (strain CC9902), this protein is Dihydroorotase.